Here is a 140-residue protein sequence, read N- to C-terminus: Regulator of ribonuclease activity B (140 aa).

Residues 115–140 (FEDPNAQDDDEDDGEAIDEDDNGIRH) are disordered. Positions 119-140 (NAQDDDEDDGEAIDEDDNGIRH) are enriched in acidic residues.

This sequence belongs to the RraB family. In terms of assembly, interacts with the C-terminal region of Rne.

It is found in the cytoplasm. In terms of biological role, globally modulates RNA abundance by binding to RNase E (Rne) and regulating its endonucleolytic activity. Can modulate Rne action in a substrate-dependent manner by altering the composition of the degradosome. The sequence is that of Regulator of ribonuclease activity B from Pantoea ananatis (strain LMG 20103).